The primary structure comprises 469 residues: Adenosylhomocysteinase (469 aa).

Positions 63, 139, and 164 each coordinate substrate. Residue 165 to 167 coordinates NAD(+); the sequence is TTT. Substrate is bound by residues Lys-194 and Asp-198. Residues Asn-199, 228–233, Glu-251, Asn-300, 321–323, and Asn-375 contribute to the NAD(+) site; these read GYGDVG and IGH.

The protein belongs to the adenosylhomocysteinase family. NAD(+) serves as cofactor.

The protein localises to the cytoplasm. It carries out the reaction S-adenosyl-L-homocysteine + H2O = L-homocysteine + adenosine. The protein operates within amino-acid biosynthesis; L-homocysteine biosynthesis; L-homocysteine from S-adenosyl-L-homocysteine: step 1/1. In terms of biological role, may play a key role in the regulation of the intracellular concentration of adenosylhomocysteine. In Pseudomonas syringae pv. tomato (strain ATCC BAA-871 / DC3000), this protein is Adenosylhomocysteinase.